Here is a 614-residue protein sequence, read N- to C-terminus: Putative ABC transporter ATP-binding protein MA_1747 (614 aa).

ABC transporter domains follow at residues 11-251 and 319-552; these read VRLE…KLGI and VLIE…AGLL. Residues 45–52 and 352–359 each bind ATP; these read GPSGCGKS and GHNGAGKT.

Belongs to the ABC transporter superfamily.

The protein localises to the cell membrane. In terms of biological role, probably part of an ABC transporter complex. Responsible for energy coupling to the transport system. In Methanosarcina acetivorans (strain ATCC 35395 / DSM 2834 / JCM 12185 / C2A), this protein is Putative ABC transporter ATP-binding protein MA_1747.